The following is a 105-amino-acid chain: MNKILKGDEVIVLTGRDKGKRGKIAVRVDEDHVLVDGVNVVKKHVRPNPLKGTTGGIVDKTMPIHQSNVAIYNPASGKADRVGIKLLADGKKVRVFKSSGEEIKA.

Belongs to the universal ribosomal protein uL24 family. In terms of assembly, part of the 50S ribosomal subunit.

Its function is as follows. One of two assembly initiator proteins, it binds directly to the 5'-end of the 23S rRNA, where it nucleates assembly of the 50S subunit. Functionally, one of the proteins that surrounds the polypeptide exit tunnel on the outside of the subunit. The sequence is that of Large ribosomal subunit protein uL24 from Leptothrix cholodnii (strain ATCC 51168 / LMG 8142 / SP-6) (Leptothrix discophora (strain SP-6)).